The primary structure comprises 475 residues: Actin-related protein 10 (475 aa).

It belongs to the actin family.

Its subcellular location is the cytoplasm. The protein localises to the cytoskeleton. The chain is Actin-related protein 10 from Dictyostelium discoideum (Social amoeba).